Consider the following 125-residue polypeptide: Large ribosomal subunit protein bL12 (125 aa).

Belongs to the bacterial ribosomal protein bL12 family. In terms of assembly, homodimer. Part of the ribosomal stalk of the 50S ribosomal subunit. Forms a multimeric L10(L12)X complex, where L10 forms an elongated spine to which 2 to 4 L12 dimers bind in a sequential fashion. Binds GTP-bound translation factors.

Functionally, forms part of the ribosomal stalk which helps the ribosome interact with GTP-bound translation factors. Is thus essential for accurate translation. This chain is Large ribosomal subunit protein bL12, found in Francisella tularensis subsp. tularensis (strain SCHU S4 / Schu 4).